The sequence spans 109 residues: Putative double-stranded DNA mimic protein YciU (109 aa).

This sequence belongs to the putative dsDNA mimic protein family.

May act as a double-stranded DNA (dsDNA) mimic. Probably regulates the activity of a dsDNA-binding protein. The protein is Putative double-stranded DNA mimic protein YciU of Salmonella paratyphi B (strain ATCC BAA-1250 / SPB7).